The chain runs to 65 residues: uncharacterized protein (65 aa).

This is an uncharacterized protein from Acidianus filamentous virus 1 (isolate United States/Yellowstone) (AFV-1).